The primary structure comprises 464 residues: Glutamate--tRNA ligase (464 aa).

Residues 9-19 (PSPTGYLHIGG) carry the 'HIGH' region motif. The 'KMSKS' region motif lies at 242–246 (KISKR). Position 245 (K245) interacts with ATP.

Belongs to the class-I aminoacyl-tRNA synthetase family. Glutamate--tRNA ligase type 1 subfamily. Monomer.

It localises to the cytoplasm. It catalyses the reaction tRNA(Glu) + L-glutamate + ATP = L-glutamyl-tRNA(Glu) + AMP + diphosphate. Catalyzes the attachment of glutamate to tRNA(Glu) in a two-step reaction: glutamate is first activated by ATP to form Glu-AMP and then transferred to the acceptor end of tRNA(Glu). The polypeptide is Glutamate--tRNA ligase (Neisseria meningitidis serogroup A / serotype 4A (strain DSM 15465 / Z2491)).